The primary structure comprises 99 residues: MISEERLLKVILAPHISEKSTVCAENNNTVVFRVAIDATKAEVKAAVAKLFEVEVDSVRTLVNKGKTKRHGARTGRRSDWKKAYVTLAAGADIDFVGAE.

This sequence belongs to the universal ribosomal protein uL23 family. In terms of assembly, part of the 50S ribosomal subunit. Contacts protein L29, and trigger factor when it is bound to the ribosome.

One of the early assembly proteins it binds 23S rRNA. One of the proteins that surrounds the polypeptide exit tunnel on the outside of the ribosome. Forms the main docking site for trigger factor binding to the ribosome. The polypeptide is Large ribosomal subunit protein uL23 (Shewanella loihica (strain ATCC BAA-1088 / PV-4)).